A 146-amino-acid chain; its full sequence is uncharacterized protein (146 aa).

Residues 7 to 146 enclose the N-acetyltransferase domain; it reads LQINYKTDEL…EGHDILIWNP (140 aa).

This is an uncharacterized protein from Staphylococcus epidermidis (strain ATCC 12228 / FDA PCI 1200).